We begin with the raw amino-acid sequence, 243 residues long: Triosephosphate isomerase (243 aa).

9 to 11 (NWK) contacts substrate. His-96 acts as the Electrophile in catalysis. Catalysis depends on Glu-165, which acts as the Proton acceptor. Substrate is bound by residues Gly-171, Ser-204, and 225–226 (GG).

Belongs to the triosephosphate isomerase family. Homodimer.

Its subcellular location is the cytoplasm. The enzyme catalyses D-glyceraldehyde 3-phosphate = dihydroxyacetone phosphate. The protein operates within carbohydrate biosynthesis; gluconeogenesis. It functions in the pathway carbohydrate degradation; glycolysis; D-glyceraldehyde 3-phosphate from glycerone phosphate: step 1/1. Functionally, involved in the gluconeogenesis. Catalyzes stereospecifically the conversion of dihydroxyacetone phosphate (DHAP) to D-glyceraldehyde-3-phosphate (G3P). This chain is Triosephosphate isomerase, found in Synechococcus sp. (strain CC9311).